Consider the following 278-residue polypeptide: Formamidopyrimidine-DNA glycosylase (278 aa).

Pro-2 serves as the catalytic Schiff-base intermediate with DNA. The active-site Proton donor is Glu-3. The active-site Proton donor; for beta-elimination activity is Lys-58. Residues His-91, Arg-109, and Arg-158 each coordinate DNA. An FPG-type zinc finger spans residues 243-277; that stretch reads KVYDRKGLPCKVCKTPISQMVQGQRTTYFCSQCQK. Arg-267 (proton donor; for delta-elimination activity) is an active-site residue.

The protein belongs to the FPG family. As to quaternary structure, monomer. It depends on Zn(2+) as a cofactor.

The enzyme catalyses Hydrolysis of DNA containing ring-opened 7-methylguanine residues, releasing 2,6-diamino-4-hydroxy-5-(N-methyl)formamidopyrimidine.. It carries out the reaction 2'-deoxyribonucleotide-(2'-deoxyribose 5'-phosphate)-2'-deoxyribonucleotide-DNA = a 3'-end 2'-deoxyribonucleotide-(2,3-dehydro-2,3-deoxyribose 5'-phosphate)-DNA + a 5'-end 5'-phospho-2'-deoxyribonucleoside-DNA + H(+). In terms of biological role, involved in base excision repair of DNA damaged by oxidation or by mutagenic agents. Acts as a DNA glycosylase that recognizes and removes damaged bases. Has a preference for oxidized purines, such as 7,8-dihydro-8-oxoguanine (8-oxoG). Has AP (apurinic/apyrimidinic) lyase activity and introduces nicks in the DNA strand. Cleaves the DNA backbone by beta-delta elimination to generate a single-strand break at the site of the removed base with both 3'- and 5'-phosphates. This Polynucleobacter necessarius subsp. necessarius (strain STIR1) protein is Formamidopyrimidine-DNA glycosylase.